Here is a 256-residue protein sequence, read N- to C-terminus: MAVGKNKRLSKGKKGIKKRTVDPFSRKDEYSVKAPSTFQIRDVGKTLVNRTSGLKNANDSLKGRIFEVSLADLQNDEDHAFRKVKLRVDEIQGKNCLTNFHGLDFTTDKLRSLVRKWQSLIEANVTVKTTDDYLLRLFAIAFTKRRPNQIKKTTYARSSQIRAIRKKMTEIMQREAASCSLAQLTTKLIPEVIGREIEKATQGIYPLQNVHIRKVKLLKSPKFDLGALLNLHGESTTDDKGHKVEREFKEQVLESV.

The segment covering 1–18 (MAVGKNKRLSKGKKGIKK) has biased composition (basic residues). The tract at residues 1–20 (MAVGKNKRLSKGKKGIKKRT) is disordered. Alanine 2 is modified (N-acetylalanine; partial).

This sequence belongs to the eukaryotic ribosomal protein eS1 family. As to quaternary structure, component of the small ribosomal subunit. Mature ribosomes consist of a small (40S) and a large (60S) subunit. The 40S subunit contains about 33 different proteins and 1 molecule of RNA (18S). The 60S subunit contains about 49 different proteins and 3 molecules of RNA (25S, 5.8S and 5S).

The protein resides in the cytoplasm. This is Small ribosomal subunit protein eS1 (rps1) from Aspergillus terreus (strain NIH 2624 / FGSC A1156).